The sequence spans 101 residues: Small ribosomal subunit protein bS18c (101 aa).

Residues 1–19 (MDKSKRPFRKSKRSFRKRL) are compositionally biased toward basic residues. Residues 1-23 (MDKSKRPFRKSKRSFRKRLPPIG) are disordered.

Belongs to the bacterial ribosomal protein bS18 family. As to quaternary structure, part of the 30S ribosomal subunit.

It localises to the plastid. The protein resides in the chloroplast. The protein is Small ribosomal subunit protein bS18c of Chloranthus spicatus (Chulantree).